The chain runs to 197 residues: CRISPR system CMR subunit Cmr7 1 (197 aa).

It belongs to the CRISPR system Cmr7 family. As to quaternary structure, possible homodimer. Part of the CMR ribonucleoprotein complex, consisting of crRNA plus Cmr1/Cmr2/Cmr3/Cmr4/Cmr5/Cmr6 at 1:1 and possibly 3 Cmr7 dimers. A Cmr2/Cmr3/Cmr7 subcomplex without crRNA can also be isolated. It does not cleave target RNA.

It localises to the cytoplasm. Functionally, CRISPR (clustered regularly interspaced short palindromic repeat) is an adaptive immune system that provides protection against mobile genetic elements (viruses, transposable elements and conjugative plasmids). CRISPR clusters contain spacers, sequences complementary to antecedent mobile elements, and target invading nucleic acids. CRISPR clusters are transcribed and processed into CRISPR RNA (crRNA). The CMR complex degrades RNA complementary to the crRNA (target RNA) within UA dinucleotides, generating 3'-OH and 5'-phosphate ends. Activity is dependent on the 8 nt long 5' tag in the crRNA, an unpaired 3' flag on the target RNA, and is stimulated by ATP. Some cleavage of the guide crRNA can also be observed. This chain is CRISPR system CMR subunit Cmr7 1 (cmr7A), found in Saccharolobus solfataricus (strain ATCC 35092 / DSM 1617 / JCM 11322 / P2) (Sulfolobus solfataricus).